Consider the following 688-residue polypeptide: Translation initiation factor IF-2 (688 aa).

Residues Gly53 to Pro101 are disordered. Residues Arg71–Gly83 show a composition bias toward basic residues. The tr-type G domain occupies Glu190–Lys359. The G1 stretch occupies residues Gly199–Thr206. Residue Gly199 to Thr206 participates in GTP binding. Residues Gly224–His228 are G2. Positions Asp245 to Gly248 are G3. GTP-binding positions include Asp245–His249 and Asn299–Asp302. A G4 region spans residues Asn299 to Asp302. A G5 region spans residues Ser335 to Ile337.

This sequence belongs to the TRAFAC class translation factor GTPase superfamily. Classic translation factor GTPase family. IF-2 subfamily.

It localises to the cytoplasm. Its function is as follows. One of the essential components for the initiation of protein synthesis. Protects formylmethionyl-tRNA from spontaneous hydrolysis and promotes its binding to the 30S ribosomal subunits. Also involved in the hydrolysis of GTP during the formation of the 70S ribosomal complex. The chain is Translation initiation factor IF-2 from Bacillus mycoides (strain KBAB4) (Bacillus weihenstephanensis).